A 574-amino-acid polypeptide reads, in one-letter code: Proline--tRNA ligase (574 aa).

The protein belongs to the class-II aminoacyl-tRNA synthetase family. ProS type 1 subfamily. Homodimer.

It is found in the cytoplasm. The enzyme catalyses tRNA(Pro) + L-proline + ATP = L-prolyl-tRNA(Pro) + AMP + diphosphate. Its function is as follows. Catalyzes the attachment of proline to tRNA(Pro) in a two-step reaction: proline is first activated by ATP to form Pro-AMP and then transferred to the acceptor end of tRNA(Pro). As ProRS can inadvertently accommodate and process non-cognate amino acids such as alanine and cysteine, to avoid such errors it has two additional distinct editing activities against alanine. One activity is designated as 'pretransfer' editing and involves the tRNA(Pro)-independent hydrolysis of activated Ala-AMP. The other activity is designated 'posttransfer' editing and involves deacylation of mischarged Ala-tRNA(Pro). The misacylated Cys-tRNA(Pro) is not edited by ProRS. In Teredinibacter turnerae (strain ATCC 39867 / T7901), this protein is Proline--tRNA ligase.